The primary structure comprises 284 residues: Transcription factor lir-3 (284 aa).

The span at 50–60 shows a compositional bias: basic and acidic residues; sequence EPRISRDELRE. A disordered region spans residues 50–71; it reads EPRISRDELRETASSPVTFETR. The C2H2-type zinc finger occupies 224–247; the sequence is YKCKQCDYLDYRKSTMRKHTVSQH.

In terms of tissue distribution, expressed in FLP neurons.

Its subcellular location is the nucleus. Its function is as follows. Positively regulates the RNA polymerase III-associated transcription of small non-coding RNAs. The chain is Transcription factor lir-3 from Caenorhabditis elegans.